Consider the following 229-residue polypeptide: Biosynthetic peptidoglycan transglycosylase (229 aa).

A helical membrane pass occupies residues 10–30 (LLLALVLVVLYQFWIFMHILW).

Belongs to the glycosyltransferase 51 family.

Its subcellular location is the cell inner membrane. It catalyses the reaction [GlcNAc-(1-&gt;4)-Mur2Ac(oyl-L-Ala-gamma-D-Glu-L-Lys-D-Ala-D-Ala)](n)-di-trans,octa-cis-undecaprenyl diphosphate + beta-D-GlcNAc-(1-&gt;4)-Mur2Ac(oyl-L-Ala-gamma-D-Glu-L-Lys-D-Ala-D-Ala)-di-trans,octa-cis-undecaprenyl diphosphate = [GlcNAc-(1-&gt;4)-Mur2Ac(oyl-L-Ala-gamma-D-Glu-L-Lys-D-Ala-D-Ala)](n+1)-di-trans,octa-cis-undecaprenyl diphosphate + di-trans,octa-cis-undecaprenyl diphosphate + H(+). The protein operates within cell wall biogenesis; peptidoglycan biosynthesis. In terms of biological role, peptidoglycan polymerase that catalyzes glycan chain elongation from lipid-linked precursors. In Methylobacillus flagellatus (strain ATCC 51484 / DSM 6875 / VKM B-1610 / KT), this protein is Biosynthetic peptidoglycan transglycosylase.